Reading from the N-terminus, the 411-residue chain is Tyrosine--tRNA ligase (411 aa).

Residue Tyr-36 coordinates L-tyrosine. A 'HIGH' region motif is present at residues 41 to 50 (PTADSLHVGH). Positions 172 and 176 each coordinate L-tyrosine. Residues 232 to 236 (KMGKT) carry the 'KMSKS' region motif. An ATP-binding site is contributed by Lys-235. Residues 344–409 (YSIANILVVT…GKKNHIKVII (66 aa)) form the S4 RNA-binding domain.

The protein belongs to the class-I aminoacyl-tRNA synthetase family. TyrS type 1 subfamily. Homodimer.

Its subcellular location is the cytoplasm. The catalysed reaction is tRNA(Tyr) + L-tyrosine + ATP = L-tyrosyl-tRNA(Tyr) + AMP + diphosphate + H(+). Functionally, catalyzes the attachment of tyrosine to tRNA(Tyr) in a two-step reaction: tyrosine is first activated by ATP to form Tyr-AMP and then transferred to the acceptor end of tRNA(Tyr). The polypeptide is Tyrosine--tRNA ligase (Malacoplasma penetrans (strain HF-2) (Mycoplasma penetrans)).